The sequence spans 230 residues: MKITWLGHSGFRIAIEQAVLLVDPWLTGNPLFPADRREEALAGATHILITHGHGDHTGDTVAIAKERGLPVVGIYDLVTWLQEKEGIDGIGFNKGGTVTLGGARVTMVQATHSSSMSGEAGPIYTGTESGYMIAGEGHVIYLSGDTDIMADMGWMGEYHRPDVGILSAGGHFTMDMKRAAFAARRYFDFRTVIPCHYRTFPLLEQSAEALKEGLPGVEVIEPQVLVPIEI.

This sequence belongs to the UPF0173 family.

This is UPF0173 metal-dependent hydrolase Rsph17029_0942 from Cereibacter sphaeroides (strain ATCC 17029 / ATH 2.4.9) (Rhodobacter sphaeroides).